A 274-amino-acid polypeptide reads, in one-letter code: Type II restriction enzyme XamI (274 aa).

The catalysed reaction is Endonucleolytic cleavage of DNA to give specific double-stranded fragments with terminal 5'-phosphates.. Functionally, a P subtype restriction enzyme that recognizes the double-stranded sequence 5'-GTCGAC-3' and cleaves after G-1. The chain is Type II restriction enzyme XamI (xamIR) from Xanthomonas campestris pv. amaranthicola.